Here is a 133-residue protein sequence, read N- to C-terminus: uncharacterized protein (133 aa).

The next 2 membrane-spanning stretches (helical) occupy residues 13 to 33 (FLLS…LFLS) and 73 to 93 (FGNP…LLLL).

It localises to the membrane. This is an uncharacterized protein from Saccharomyces cerevisiae (strain ATCC 204508 / S288c) (Baker's yeast).